We begin with the raw amino-acid sequence, 177 residues long: Peptide methionine sulfoxide reductase MsrA (177 aa).

Cys15 is an active-site residue.

The protein belongs to the MsrA Met sulfoxide reductase family.

It carries out the reaction L-methionyl-[protein] + [thioredoxin]-disulfide + H2O = L-methionyl-(S)-S-oxide-[protein] + [thioredoxin]-dithiol. The catalysed reaction is [thioredoxin]-disulfide + L-methionine + H2O = L-methionine (S)-S-oxide + [thioredoxin]-dithiol. Its function is as follows. Has an important function as a repair enzyme for proteins that have been inactivated by oxidation. Catalyzes the reversible oxidation-reduction of methionine sulfoxide in proteins to methionine. The chain is Peptide methionine sulfoxide reductase MsrA from Listeria monocytogenes serotype 4a (strain HCC23).